The following is a 183-amino-acid chain: Capsid protein (183 aa).

Positions 136 to 183 (NAPILSTLPETTVVRRRGRSPRRRTPSPRRRRSQSPRRRRSQSRESQC) are disordered. Residues 149–176 (VRRRGRSPRRRTPSPRRRRSQSPRRRRS) show a composition bias toward basic residues. Phosphoserine; by host is present on residues Ser155, Ser162, and Ser170. A 1; half-length repeat occupies 155-161 (SPRRRTP). Positions 155–177 (SPRRRTPSPRRRRSQSPRRRRSQ) are 3 X 8 AA repeats of S-P-R-R-R-[PR]-S-Q. Positions 158 to 175 (RRTPSPRRRRSQSPRRRR) match the Bipartite nuclear localization signal motif. 2 consecutive repeat copies span residues 162–169 (SPRRRRSQ) and 170–177 (SPRRRRSQ). The tract at residues 177–183 (QSRESQC) is RNA binding.

It belongs to the orthohepadnavirus core antigen family. In terms of assembly, homodimerizes, then multimerizes. Interacts with cytosol exposed regions of viral L glycoprotein present in the reticulum-to-Golgi compartment. Interacts with human FLNB. Phosphorylated form interacts with host importin alpha; this interaction depends on the exposure of the NLS, which itself depends upon genome maturation and/or phosphorylation of the capsid protein. Interacts with host NUP153. Phosphorylated by host SRPK1, SRPK2, and maybe protein kinase C or GAPDH. Phosphorylation is critical for pregenomic RNA packaging. Protein kinase C phosphorylation is stimulated by HBx protein and may play a role in transport of the viral genome to the nucleus at the late step during the viral replication cycle.

The protein resides in the virion. It localises to the host cytoplasm. Functionally, self assembles to form an icosahedral capsid. Most capsids appear to be large particles with an icosahedral symmetry of T=4 and consist of 240 copies of capsid protein, though a fraction forms smaller T=3 particles consisting of 180 capsid proteins. Entering capsids are transported along microtubules to the nucleus. Phosphorylation of the capsid is thought to induce exposure of nuclear localization signal in the C-terminal portion of the capsid protein that allows binding to the nuclear pore complex via the importin (karyopherin-) alpha and beta. Capsids are imported in intact form through the nuclear pore into the nuclear basket, where it probably binds NUP153. Only capsids that contain the mature viral genome can release the viral DNA and capsid protein into the nucleoplasm. Immature capsids get stuck in the basket. Capsids encapsulate the pre-genomic RNA and the P protein. Pre-genomic RNA is reverse-transcribed into DNA while the capsid is still in the cytoplasm. The capsid can then either be directed to the nucleus, providing more genomes for transcription, or bud through the endoplasmic reticulum to provide new virions. The polypeptide is Capsid protein (Hepatitis B virus genotype D subtype ayw (isolate Italy/CI/1992) (HBV-D)).